A 335-amino-acid polypeptide reads, in one-letter code: Tryptophan--tRNA ligase (335 aa).

ATP-binding positions include 19–21 (QPS) and 28–29 (GN). The 'HIGH' region motif lies at 20–29 (PSSGMLHLGN). Position 143 (Asp-143) interacts with L-tryptophan. Residues 155-157 (GAD), Ile-192, and 201-205 (KMSKS) each bind ATP. The 'KMSKS' region signature appears at 201-205 (KMSKS).

The protein belongs to the class-I aminoacyl-tRNA synthetase family. In terms of assembly, homodimer.

It is found in the cytoplasm. The catalysed reaction is tRNA(Trp) + L-tryptophan + ATP = L-tryptophyl-tRNA(Trp) + AMP + diphosphate + H(+). Its function is as follows. Catalyzes the attachment of tryptophan to tRNA(Trp). This is Tryptophan--tRNA ligase from Tropheryma whipplei (strain TW08/27) (Whipple's bacillus).